The primary structure comprises 201 residues: ATP-dependent Clp protease proteolytic subunit 2 (201 aa).

The active-site Nucleophile is Ser98. His123 is an active-site residue.

This sequence belongs to the peptidase S14 family. As to quaternary structure, fourteen ClpP subunits assemble into 2 heptameric rings which stack back to back to give a disk-like structure with a central cavity, resembling the structure of eukaryotic proteasomes.

It is found in the cytoplasm. The enzyme catalyses Hydrolysis of proteins to small peptides in the presence of ATP and magnesium. alpha-casein is the usual test substrate. In the absence of ATP, only oligopeptides shorter than five residues are hydrolyzed (such as succinyl-Leu-Tyr-|-NHMec, and Leu-Tyr-Leu-|-Tyr-Trp, in which cleavage of the -Tyr-|-Leu- and -Tyr-|-Trp bonds also occurs).. Functionally, cleaves peptides in various proteins in a process that requires ATP hydrolysis. Has a chymotrypsin-like activity. Plays a major role in the degradation of misfolded proteins. The sequence is that of ATP-dependent Clp protease proteolytic subunit 2 from Pseudomonas aeruginosa (strain ATCC 15692 / DSM 22644 / CIP 104116 / JCM 14847 / LMG 12228 / 1C / PRS 101 / PAO1).